The chain runs to 404 residues: Cysteine desulfurase IscS (404 aa).

Pyridoxal 5'-phosphate contacts are provided by residues 75 to 76, asparagine 155, glutamine 183, and 203 to 205; these read AT and SGH. Lysine 206 carries the N6-(pyridoxal phosphate)lysine modification. Position 243 (threonine 243) interacts with pyridoxal 5'-phosphate. Residue cysteine 328 is the Cysteine persulfide intermediate of the active site. Cysteine 328 contacts [2Fe-2S] cluster.

It belongs to the class-V pyridoxal-phosphate-dependent aminotransferase family. NifS/IscS subfamily. As to quaternary structure, homodimer. Forms a heterotetramer with IscU, interacts with other sulfur acceptors. Pyridoxal 5'-phosphate serves as cofactor.

The protein resides in the cytoplasm. It catalyses the reaction (sulfur carrier)-H + L-cysteine = (sulfur carrier)-SH + L-alanine. Its pathway is cofactor biosynthesis; iron-sulfur cluster biosynthesis. Its function is as follows. Master enzyme that delivers sulfur to a number of partners involved in Fe-S cluster assembly, tRNA modification or cofactor biosynthesis. Catalyzes the removal of elemental sulfur and selenium atoms from cysteine and selenocysteine to produce alanine. Functions as a sulfur delivery protein for Fe-S cluster synthesis onto IscU, an Fe-S scaffold assembly protein, as well as other S acceptor proteins. Also functions as a selenium delivery protein in the pathway for the biosynthesis of selenophosphate. In Escherichia coli (strain K12 / DH10B), this protein is Cysteine desulfurase IscS.